Here is a 467-residue protein sequence, read N- to C-terminus: Retinoic acid receptor RXR-gamma (467 aa).

Positions 1-142 (MYGNYPHFIK…TSPGSLAKHI (142 aa)) are modulating. 2 consecutive NR C4-type zinc fingers follow at residues 143-163 (CAIC…CEGC) and 179-203 (CRDN…YQKC). The nuclear receptor DNA-binding region spans 143–208 (CAICGDRSSG…RYQKCLAMGM (66 aa)). The interval 209 to 232 (KREAVQEERQGSRERSENEAESTS) is hinge. Over residues 214-226 (QEERQGSRERSEN) the composition is skewed to basic and acidic residues. Residues 214 to 237 (QEERQGSRERSENEAESTSGGSED) are disordered. One can recognise an NR LBD domain in the interval 235–463 (SEDMPVERIL…TFLMEMLETP (229 aa)).

The protein belongs to the nuclear hormone receptor family. NR2 subfamily. As to quaternary structure, homodimer. Heterodimer; with a RAR molecule. Binds DNA preferentially as a RAR/RXR heterodimer. In terms of tissue distribution, isoform 1 is highly expressed inliver. Isoform 2 is abundantly expressed in eye and dorsal root ganglia.

It localises to the nucleus. Receptor for retinoic acid. Retinoic acid receptors bind as heterodimers to their target response elements in response to their ligands, all-trans or 9-cis retinoic acid, and regulate gene expression in various biological processes. The RAR/RXR heterodimers bind to the retinoic acid response elements (RARE) composed of tandem 5'-AGGTCA-3' sites known as DR1-DR5. The high affinity ligand for RXRs is 9-cis retinoic acid. This chain is Retinoic acid receptor RXR-gamma (RXRG), found in Gallus gallus (Chicken).